We begin with the raw amino-acid sequence, 295 residues long: Accessory protein VasW (295 aa).

In terms of biological role, plays an accessory role in VasX-mediated bacterial killing. This chain is Accessory protein VasW, found in Vibrio cholerae serotype O1 (strain ATCC 39315 / El Tor Inaba N16961).